The chain runs to 264 residues: Thymidylate synthase (264 aa).

DUMP is bound at residue Arg21. (6R)-5,10-methylene-5,6,7,8-tetrahydrofolate is bound at residue His51. Residue 126-127 participates in dUMP binding; sequence RR. Cys146 serves as the catalytic Nucleophile. DUMP contacts are provided by residues 166 to 169, Asn177, and 207 to 209; these read RSGD and HLY. Residue Asp169 coordinates (6R)-5,10-methylene-5,6,7,8-tetrahydrofolate. Residue Ala263 coordinates (6R)-5,10-methylene-5,6,7,8-tetrahydrofolate.

This sequence belongs to the thymidylate synthase family. Bacterial-type ThyA subfamily. Homodimer.

Its subcellular location is the cytoplasm. It catalyses the reaction dUMP + (6R)-5,10-methylene-5,6,7,8-tetrahydrofolate = 7,8-dihydrofolate + dTMP. It participates in pyrimidine metabolism; dTTP biosynthesis. Its function is as follows. Catalyzes the reductive methylation of 2'-deoxyuridine-5'-monophosphate (dUMP) to 2'-deoxythymidine-5'-monophosphate (dTMP) while utilizing 5,10-methylenetetrahydrofolate (mTHF) as the methyl donor and reductant in the reaction, yielding dihydrofolate (DHF) as a by-product. This enzymatic reaction provides an intracellular de novo source of dTMP, an essential precursor for DNA biosynthesis. This Xanthomonas oryzae pv. oryzae (strain MAFF 311018) protein is Thymidylate synthase.